Consider the following 464-residue polypeptide: MSQLITSPKINEKETLKFECETGNYHTFCPISCVSWLYQKIEDSFFLVIGTKTCGYFLQNALGVMIFAEPRYAMAELEEADISAQLNDYKELKRLCLQIKRDRNPSVIVWIGTCTTEIIKMDLEGMAPRLETEIGIPIVVARANGLDYAFTQGEDTVLAAMACRCPDKISTTSDSKNLETPMMIDNTQKNGQNSKALAHPPLVLFGSLPSAVVNVLTLELNKQGITVDGWLPSSRYTDLPALGEDVYVCGVNPFLSRTAMTLMRRKKCKLINAPFPIGPDGTRAWIEKICNVLGVIPTGLEEREKKIWQSLENYLPLVRGKSVFFMGDNLLEISLARFLTRCGMIVYECGVPYLDKRYQASELLLLEQTCLEKNVPMPRIVEKPDNYYQIQRIRELQPDLVITGMALSNPLEARGINTKWSVEFTFAQIHGFANSKDVLELVTRPLRRNMMQQVSNKTLVKPAK.

Residues Cys-29, Cys-54, and Cys-114 each contribute to the [4Fe-4S] cluster site.

Belongs to the BchN/ChlN family. As to quaternary structure, protochlorophyllide reductase is composed of three subunits; ChlL, ChlN and ChlB. Forms a heterotetramer of two ChlB and two ChlN subunits. It depends on [4Fe-4S] cluster as a cofactor.

Its subcellular location is the plastid. The protein resides in the chloroplast. The enzyme catalyses chlorophyllide a + oxidized 2[4Fe-4S]-[ferredoxin] + 2 ADP + 2 phosphate = protochlorophyllide a + reduced 2[4Fe-4S]-[ferredoxin] + 2 ATP + 2 H2O. It functions in the pathway porphyrin-containing compound metabolism; chlorophyll biosynthesis (light-independent). Functionally, component of the dark-operative protochlorophyllide reductase (DPOR) that uses Mg-ATP and reduced ferredoxin to reduce ring D of protochlorophyllide (Pchlide) to form chlorophyllide a (Chlide). This reaction is light-independent. The NB-protein (ChlN-ChlB) is the catalytic component of the complex. In Stigeoclonium helveticum (Green alga), this protein is Light-independent protochlorophyllide reductase subunit N.